Reading from the N-terminus, the 289-residue chain is N-acetylmuramoyl-L-alanine amidase AmiA (289 aa).

A signal peptide (tat-type signal) is located at residues 1–34 (MSTFKPLKTLTSRRQVLKAGLAALTLSGMSQAIA). Positions 39-63 (LKTSNGHSKPKAKKSGGKRVVVLDP) are disordered. Over residues 46-55 (SKPKAKKSGG) the composition is skewed to basic residues. Residues 59-273 (VVLDPGHGGI…IATAIAEGVI (215 aa)) form the MurNAc-LAA domain.

The protein belongs to the N-acetylmuramoyl-L-alanine amidase 3 family. In terms of processing, exported by the Tat system. The position of the signal peptide cleavage has not been experimentally proven. Can also be exported by the Sec system.

It is found in the periplasm. The enzyme catalyses Hydrolyzes the link between N-acetylmuramoyl residues and L-amino acid residues in certain cell-wall glycopeptides.. In terms of biological role, cell-wall hydrolase involved in septum cleavage during cell division. Can also act as powerful autolysin in the presence of murein synthesis inhibitors. The chain is N-acetylmuramoyl-L-alanine amidase AmiA (amiA) from Escherichia coli (strain K12).